Consider the following 137-residue polypeptide: Prostate and testis expressed protein 13 (137 aa).

A signal peptide spans 1-20; the sequence is MFQKLLLSVFIILLMDVGER. The 87-residue stretch at 28 to 114 folds into the UPAR/Ly6 domain; it reads RHCNLCSHYD…CIDRNYCNDG (87 aa). Cystine bridges form between Cys30-Cys60, Cys33-Cys41, Cys48-Cys84, Cys87-Cys104, and Cys105-Cys111. Asn57 is a glycosylation site (N-linked (GlcNAc...) asparagine).

This sequence belongs to the PATE family. In terms of tissue distribution, strongly expressed in the epididymis, including the initial segment, caput, corpus and cauda regions. Weakly expressed in prostate.

The protein localises to the secreted. This chain is Prostate and testis expressed protein 13, found in Mus musculus (Mouse).